Consider the following 65-residue polypeptide: ITYTDCTESGQNLCLCEGSNVCGKGNKCILGSNGEENQCVTGEGTPKPQSHNDGDFEEIPEEYLQ.

Residues 1-3 (ITY) are interaction with thrombin active site. Cystine bridges form between cysteine 6/cysteine 14, cysteine 16/cysteine 28, and cysteine 22/cysteine 39. Residues 39–65 (CVTGEGTPKPQSHNDGDFEEIPEEYLQ) are disordered. Threonine 45 carries O-linked (GalNAc...) threonine glycosylation. Positions 55–65 (DFEEIPEEYLQ) are interaction with fibrinogen-binding exosite of thrombin. Acidic residues predominate over residues 55–65 (DFEEIPEEYLQ). Sulfotyrosine is present on tyrosine 63.

It belongs to the protease inhibitor I14 (hirudin) family.

The protein resides in the secreted. Functionally, hirudin is a potent thrombin-specific protease inhibitor. It forms a stable non-covalent complex with alpha-thrombin, thereby abolishing its ability to cleave fibrinogen. This chain is Hirudin-2B, found in Hirudo medicinalis (Medicinal leech).